Reading from the N-terminus, the 185-residue chain is Large ribosomal subunit protein uL5 (185 aa).

The protein belongs to the universal ribosomal protein uL5 family. As to quaternary structure, part of the 50S ribosomal subunit; part of the 5S rRNA/L5/L18/L25 subcomplex. Contacts the 5S rRNA and the P site tRNA. Forms a bridge to the 30S subunit in the 70S ribosome.

Its function is as follows. This is one of the proteins that bind and probably mediate the attachment of the 5S RNA into the large ribosomal subunit, where it forms part of the central protuberance. In the 70S ribosome it contacts protein S13 of the 30S subunit (bridge B1b), connecting the 2 subunits; this bridge is implicated in subunit movement. Contacts the P site tRNA; the 5S rRNA and some of its associated proteins might help stabilize positioning of ribosome-bound tRNAs. In Bartonella henselae (strain ATCC 49882 / DSM 28221 / CCUG 30454 / Houston 1) (Rochalimaea henselae), this protein is Large ribosomal subunit protein uL5.